The primary structure comprises 73 residues: Translation initiation factor IF-1 (73 aa).

One can recognise an S1-like domain in the interval 1–73 (MSEKEAGIEV…TRGRITYRDK (73 aa)).

The protein belongs to the IF-1 family. In terms of assembly, component of the 30S ribosomal translation pre-initiation complex which assembles on the 30S ribosome in the order IF-2 and IF-3, IF-1 and N-formylmethionyl-tRNA(fMet); mRNA recruitment can occur at any time during PIC assembly.

Its subcellular location is the cytoplasm. In terms of biological role, one of the essential components for the initiation of protein synthesis. Stabilizes the binding of IF-2 and IF-3 on the 30S subunit to which N-formylmethionyl-tRNA(fMet) subsequently binds. Helps modulate mRNA selection, yielding the 30S pre-initiation complex (PIC). Upon addition of the 50S ribosomal subunit IF-1, IF-2 and IF-3 are released leaving the mature 70S translation initiation complex. The protein is Translation initiation factor IF-1 of Anaeromyxobacter sp. (strain Fw109-5).